The primary structure comprises 127 residues: Cystatin cpi-1 (127 aa).

A signal peptide spans 1 to 19 (MFFPIVWLSVLLIISKSFA). Residues 68-72 (QVVAG) carry the Secondary area of contact motif. A disulfide bond links cysteine 86 and cysteine 98.

Belongs to the cystatin family.

In terms of biological role, cysteine protease inhibitor which inhibits members of the peptidase C1 family. Does not inhibit asparaginyl endopeptidase. This chain is Cystatin cpi-1, found in Brugia malayi (Filarial nematode worm).